The chain runs to 485 residues: Protein nucleotidyltransferase YdiU (485 aa).

ATP contacts are provided by Gly-85, Gly-87, Arg-88, Lys-108, Asp-120, Gly-121, Arg-171, and Arg-178. The Proton acceptor role is filled by Asp-249. Residues Asn-250 and Asp-259 each coordinate Mg(2+). An ATP-binding site is contributed by Asp-259. A disordered region spans residues Leu-462 to Thr-485.

This sequence belongs to the SELO family. Requires Mg(2+) as cofactor. Mn(2+) serves as cofactor.

It carries out the reaction L-seryl-[protein] + ATP = 3-O-(5'-adenylyl)-L-seryl-[protein] + diphosphate. The catalysed reaction is L-threonyl-[protein] + ATP = 3-O-(5'-adenylyl)-L-threonyl-[protein] + diphosphate. The enzyme catalyses L-tyrosyl-[protein] + ATP = O-(5'-adenylyl)-L-tyrosyl-[protein] + diphosphate. It catalyses the reaction L-histidyl-[protein] + UTP = N(tele)-(5'-uridylyl)-L-histidyl-[protein] + diphosphate. It carries out the reaction L-seryl-[protein] + UTP = O-(5'-uridylyl)-L-seryl-[protein] + diphosphate. The catalysed reaction is L-tyrosyl-[protein] + UTP = O-(5'-uridylyl)-L-tyrosyl-[protein] + diphosphate. Its function is as follows. Nucleotidyltransferase involved in the post-translational modification of proteins. It can catalyze the addition of adenosine monophosphate (AMP) or uridine monophosphate (UMP) to a protein, resulting in modifications known as AMPylation and UMPylation. This Teredinibacter turnerae (strain ATCC 39867 / T7901) protein is Protein nucleotidyltransferase YdiU.